Here is a 250-residue protein sequence, read N- to C-terminus: Probable phosphatase VPA1527 (250 aa).

H8, H10, H16, H41, E74, H102, H132, D194, and H196 together coordinate Zn(2+).

This sequence belongs to the PHP family. Zn(2+) is required as a cofactor.

The chain is Probable phosphatase VPA1527 from Vibrio parahaemolyticus serotype O3:K6 (strain RIMD 2210633).